The following is a 102-amino-acid chain: MKSRQDIQKLFSTWCRRICSISSLLAPLDATMHKYDKKTLIRIYNPKKIGDTLQRCVKLLGHFKENPAYINTEQCWLCNFAARRHSRKNIRVSRMRAKRKYQ.

This is an uncharacterized protein from Saccharomyces cerevisiae (strain ATCC 204508 / S288c) (Baker's yeast).